We begin with the raw amino-acid sequence, 411 residues long: Tyrosine--tRNA ligase (411 aa).

Y34 serves as a coordination point for L-tyrosine. Positions 39–48 (CTATSLHIGS) match the 'HIGH' region motif. L-tyrosine-binding residues include Y171 and Q175. The 'KMSKS' region motif lies at 231 to 235 (KMGKT). Residue K234 participates in ATP binding. Residues 345–411 (ISAYELFHEA…GKKRHILVRV (67 aa)) form the S4 RNA-binding domain.

The protein belongs to the class-I aminoacyl-tRNA synthetase family. TyrS type 1 subfamily. As to quaternary structure, homodimer.

The protein resides in the cytoplasm. The catalysed reaction is tRNA(Tyr) + L-tyrosine + ATP = L-tyrosyl-tRNA(Tyr) + AMP + diphosphate + H(+). In terms of biological role, catalyzes the attachment of tyrosine to tRNA(Tyr) in a two-step reaction: tyrosine is first activated by ATP to form Tyr-AMP and then transferred to the acceptor end of tRNA(Tyr). This Rickettsia massiliae (strain Mtu5) protein is Tyrosine--tRNA ligase.